Reading from the N-terminus, the 79-residue chain is AVATALIQVAYMGLVGSFPFNSFLSGVLSCIGTAVLAVCLRIQVNKDNKEFKDLPPERAFADFVLCNLVLHLVIMNFLG.

Topologically, residues 1 to 19 are lumenal; the sequence is AVATALIQVAYMGLVGSFP. Residues 20–40 form a helical membrane-spanning segment; the sequence is FNSFLSGVLSCIGTAVLAVCL. Topologically, residues 41 to 58 are cytoplasmic; it reads RIQVNKDNKEFKDLPPER. A helical transmembrane segment spans residues 59 to 79; that stretch reads AFADFVLCNLVLHLVIMNFLG.

The protein belongs to the DAD/OST2 family. As to quaternary structure, component of the oligosaccharyltransferase (OST) complex.

The protein resides in the endoplasmic reticulum membrane. It functions in the pathway protein modification; protein glycosylation. Functionally, subunit of the oligosaccharyl transferase (OST) complex that catalyzes the initial transfer of a defined glycan (Glc(3)Man(9)GlcNAc(2) in eukaryotes) from the lipid carrier dolichol-pyrophosphate to an asparagine residue within an Asn-X-Ser/Thr consensus motif in nascent polypeptide chains, the first step in protein N-glycosylation. N-glycosylation occurs cotranslationally and the complex associates with the Sec61 complex at the channel-forming translocon complex that mediates protein translocation across the endoplasmic reticulum (ER). All subunits are required for a maximal enzyme activity. The sequence is that of Dolichyl-diphosphooligosaccharide--protein glycosyltransferase subunit DAD1 (DAD1) from Zea mays (Maize).